The sequence spans 936 residues: Lipoxygenase 2.1, chloroplastic (936 aa).

A disordered region spans residues 1–69; sequence MLTATKPLVG…LSADSNGAAV (69 aa). Residues 47–59 show a composition bias toward low complexity; it reads STSTSTTTTTTTT. The PLAT domain occupies 88-217; sequence MKATVTVHMS…CTPDKRVFFP (130 aa). Residues 220-936 form the Lipoxygenase domain; the sequence is SYLPSQTPKG…EMGIPNSISI (717 aa). The tract at residues 264–308 is disordered; that stretch reads LGNPDDDNNPTTRPVLGGKEHPYPRRCRTGRPRSKKDPFSEERSH. The span at 287–297 shows a compositional bias: basic residues; sequence PRRCRTGRPRS. The segment covering 298–308 has biased composition (basic and acidic residues); sequence KKDPFSEERSH. H587, H592, H777, N781, and I936 together coordinate Fe cation.

It belongs to the lipoxygenase family. It depends on Fe cation as a cofactor. The N-terminus is blocked.

The protein localises to the plastid. Its subcellular location is the chloroplast. The catalysed reaction is (9Z,12Z)-octadecadienoate + O2 = (13S)-hydroperoxy-(9Z,11E)-octadecadienoate. It catalyses the reaction (9Z,12Z,15Z)-octadecatrienoate + O2 = (13S)-hydroperoxy-(9Z,11E,15Z)-octadecatrienoate. It participates in lipid metabolism; oxylipin biosynthesis. Functionally, plant lipoxygenase may be involved in a number of diverse aspects of plant physiology including growth and development, pest resistance, and senescence or responses to wounding. This enzyme is possibly involved in jasmonic acid synthesis. It exhibits linoleate 13-lipoxygenase and arachidonate 15-lipoxygenase activity. This chain is Lipoxygenase 2.1, chloroplastic (LOX2.1), found in Hordeum vulgare (Barley).